A 209-amino-acid polypeptide reads, in one-letter code: uncharacterized protein (209 aa).

The stretch at 13–75 forms a coiled coil; that stretch reads LSAVDKQMDT…AINLAAVMTD (63 aa). The interval 107 to 135 is disordered; the sequence is ATPLPSSNTNNEQSMSTYSSSISGKTSET. Polar residues predominate over residues 110–119; that stretch reads LPSSNTNNEQ. Residues 120 to 133 show a composition bias toward low complexity; sequence SMSTYSSSISGKTS.

Belongs to the asfivirus K205R family.

The protein localises to the host cytoplasm. In terms of biological role, induces host endoplasmic reticulum stress and consequently activates autophagy and NF-kappa-B signaling pathway. In turn, may induce autophagy-mediated STING1 degradation and innate immune evasion. This is an uncharacterized protein from Ornithodoros (relapsing fever ticks).